Consider the following 216-residue polypeptide: Large ribosomal subunit protein uL3 (216 aa).

The interval 134–153 (RATHGNSRSHNVPGSIGMAQ) is disordered. Gln153 bears the N5-methylglutamine mark.

The protein belongs to the universal ribosomal protein uL3 family. As to quaternary structure, part of the 50S ribosomal subunit. Forms a cluster with proteins L14 and L19. Methylated by PrmB.

Its function is as follows. One of the primary rRNA binding proteins, it binds directly near the 3'-end of the 23S rRNA, where it nucleates assembly of the 50S subunit. The polypeptide is Large ribosomal subunit protein uL3 (Cupriavidus taiwanensis (strain DSM 17343 / BCRC 17206 / CCUG 44338 / CIP 107171 / LMG 19424 / R1) (Ralstonia taiwanensis (strain LMG 19424))).